The following is a 707-amino-acid chain: Choline transporter-like protein 4 (707 aa).

Over 1-32 the chain is Cytoplasmic; the sequence is MGEKQDPDKAYGKPAKYDPSFRGPIRNRSCTD. Residues 33–53 traverse the membrane as a helical segment; that stretch reads IICCVLFFVFILGYIAVGLVA. Residues 54–226 are Extracellular-facing; that stretch reads WVYGDPQQVL…KIFEDFAQSW (173 aa). N67, N142, N184, and N195 each carry an N-linked (GlcNAc...) asparagine glycan. A helical membrane pass occupies residues 227–247; it reads YWILAALGVALVLSLLFVLLL. Topologically, residues 248 to 249 are cytoplasmic; the sequence is RL. Residues 250 to 270 form a helical membrane-spanning segment; it reads VAGPLVFVLIIGVLGVLAYGI. At 271-306 the chain is on the extracellular side; the sequence is YHCWNEYRLLRDKGASISQLGFTTNLSAYSSVQETW. Residue N295 is glycosylated (N-linked (GlcNAc...) asparagine). Residues 307–327 form a helical membrane-spanning segment; the sequence is LAALILLAVLEGILLLMLIFL. The Cytoplasmic portion of the chain corresponds to 328-355; it reads RQRIRIAIALLEEASRAVGQMMSTLFYP. Residues 356 to 376 form a helical membrane-spanning segment; it reads LVTFVLLLVCIAYWAMTALYL. Topologically, residues 377–452 are extracellular; sequence ATSGQPQYVL…GVLGLFWTIN (76 aa). 3 N-linked (GlcNAc...) asparagine glycosylation sites follow: N390, N402, and N413. The helical transmembrane segment at 453–473 threads the bilayer; it reads WVLALGQCVLAGAFASFYWAF. Residues 474–498 are Cytoplasmic-facing; the sequence is HKPRDIPTFPLSSAFIRTLRYHTGS. The helical transmembrane segment at 499 to 519 threads the bilayer; that stretch reads LAFGALILTLVQIARAILEYI. Topologically, residues 520–557 are extracellular; sequence DHKLRGAQNPVARCIMCCFKCCLWCLEKFIKFLNRNAY. The helical transmembrane segment at 558–578 threads the bilayer; that stretch reads IMIAIYGKNFCVSAKNAFMLL. Topologically, residues 579 to 594 are cytoplasmic; sequence MRNIVRVVVLDKVTDL. Residues 595-615 form a helical membrane-spanning segment; the sequence is LLFFGKLLVVGGVGVLSFFFF. Residues 616-635 are Extracellular-facing; it reads TGRIQGLGKDFESPQLNYYW. The chain crosses the membrane as a helical span at residues 636–656; that stretch reads LPIMTSIMGAYVIASGFFSVF. At 657–707 the chain is on the cytoplasmic side; it reads GMCVDTLFLCFLEDLERNDGSLDRPYYMSKALLKILGKKNEVPSGDKKRKK.

It belongs to the CTL (choline transporter-like) family. In terms of processing, N-glycosylated; N-glycosylation of Asn-677 and Asn-390 is required for a proper thiamine pyrophosphate uptake.

Its subcellular location is the membrane. The protein localises to the apical cell membrane. The enzyme catalyses choline(out) + n H(+)(in) = choline(in) + n H(+)(out). The catalysed reaction is thiamine diphosphate(out) = thiamine diphosphate(in). Functionally, choline transporter that plays a role in the choline-acetylcholine system and is required to the efferent innervation of hair cells in the olivocochlear bundle for the maintenance of physiological function of outer hair cells and the protection of hair cells from acoustic injury. Also described as a thiamine pyrophosphate transporter in colon, may mediate the absorption of microbiota-generated thiamine pyrophosphate and contribute to host thiamine (vitamin B1) homeostasis. This is Choline transporter-like protein 4 from Sus scrofa (Pig).